Consider the following 462-residue polypeptide: Integrator complex subunit 12 (462 aa).

The segment at 42-132 (GIDSSYRPSQ…PETQSSPITV (91 aa)) is disordered. Over residues 59-86 (ISSTKNISIKQEPKISSSLPSGNNNGKV) the composition is skewed to polar residues. A Glycyl lysine isopeptide (Lys-Gly) (interchain with G-Cter in SUMO2) cross-link involves residue lysine 68. Over residues 88–124 (TTEKVKKEAEKRPADKMKSDITEGVDIPKKPRLEKPE) the composition is skewed to basic and acidic residues. A Phosphoserine modification is found at serine 128. A PHD-type zinc finger spans residues 159–215 (GLACVVCRQMMVASGNQLVECQECHNLYHRDCHKPQVTDKEANDPRLVWYCARCTRQ). Lysine 254 is covalently cross-linked (Glycyl lysine isopeptide (Lys-Gly) (interchain with G-Cter in SUMO2)). Over residues 301 to 328 (SSAGPSTAKLSSTTQNNTGKPATSSANQ) the composition is skewed to polar residues. Residues 301–462 (SSAGPSTAKL…KKAAQKKLKK (162 aa)) form a disordered region. Low complexity-rich tracts occupy residues 347–358 (KIGSNNSTTPTV) and 382–437 (VSKV…GPTS). A compositionally biased stretch (basic residues) spans 449-462 (QMVKKKAAQKKLKK).

This sequence belongs to the Integrator subunit 12 family. Component of the Integrator complex, composed of core subunits INTS1, INTS2, INTS3, INTS4, INTS5, INTS6, INTS7, INTS8, INTS9/RC74, INTS10, INTS11/CPSF3L, INTS12, INTS13, INTS14 and INTS15. The core complex associates with protein phosphatase 2A subunits PPP2CA and PPP2R1A, to form the Integrator-PP2A (INTAC) complex. Post-translationally, dephosphorylated at Ser-128 by the PNUTS-PP1 complex, promoting RNA polymerase II transcription pause-release.

The protein resides in the nucleus. In terms of biological role, component of the integrator complex, a multiprotein complex that terminates RNA polymerase II (Pol II) transcription in the promoter-proximal region of genes. The integrator complex provides a quality checkpoint during transcription elongation by driving premature transcription termination of transcripts that are unfavorably configured for transcriptional elongation: the complex terminates transcription by (1) catalyzing dephosphorylation of the C-terminal domain (CTD) of Pol II subunit POLR2A/RPB1 and SUPT5H/SPT5, (2) degrading the exiting nascent RNA transcript via endonuclease activity and (3) promoting the release of Pol II from bound DNA. The integrator complex is also involved in terminating the synthesis of non-coding Pol II transcripts, such as enhancer RNAs (eRNAs), small nuclear RNAs (snRNAs), telomerase RNAs and long non-coding RNAs (lncRNAs). Mediates recruitment of cytoplasmic dynein to the nuclear envelope, probably as component of the integrator complex. The protein is Integrator complex subunit 12 of Homo sapiens (Human).